The sequence spans 480 residues: Ftsk domain-containing protein YdcQ (480 aa).

A run of 2 helical transmembrane segments spans residues 25–45 and 71–91; these read VKLA…FLFW and SVLC…FLLF. One can recognise a FtsK domain in the interval 217–399; that stretch reads MKHISWQFDK…LGLMSDTGYG (183 aa). ATP is bound at residue 234 to 241; it reads GGTGGGKT.

The protein localises to the cell membrane. In Bacillus subtilis (strain 168), this protein is Ftsk domain-containing protein YdcQ (ydcQ).